The following is a 220-amino-acid chain: UPF0319 protein YccT (220 aa).

The first 20 residues, 1–20 (MKTGALATFLALCLPVTVFA), serve as a signal peptide directing secretion.

The protein belongs to the UPF0319 family.

In Salmonella agona (strain SL483), this protein is UPF0319 protein YccT.